The primary structure comprises 213 residues: Ribonuclease T (213 aa).

In terms of domain architecture, Exonuclease spans 28–202; that stretch reads VVVDVETGGF…YDTEQTARLF (175 aa). The Mg(2+) site is built by aspartate 31, glutamate 33, histidine 189, and aspartate 194. Histidine 189 acts as the Proton donor/acceptor in catalysis.

This sequence belongs to the RNase T family. As to quaternary structure, homodimer. It depends on Mg(2+) as a cofactor.

Functionally, trims short 3' overhangs of a variety of RNA species, leaving a one or two nucleotide 3' overhang. Responsible for the end-turnover of tRNA: specifically removes the terminal AMP residue from uncharged tRNA (tRNA-C-C-A). Also appears to be involved in tRNA biosynthesis. The polypeptide is Ribonuclease T (Xanthomonas axonopodis pv. citri (strain 306)).